The primary structure comprises 530 residues: MKLNDVTRGTGLEEHGIINANLIYWTPPTAVLYEQIVERGEGLVSHLGALAVKTGHYTGRAANEKFIVDEPTSRDHINWGKVNRPFDPEKFDSLYKRMTAYMHGKDLFIQDCFAGASPKHRLPIRVIAEKAWHSLFARNMFVKATAAELENHKPRFTVIDMPNFHAVPQIDGTNSETFIIINFAKRLVIIGGTSYAGEIKKSIFTVLNYLLPHHSKVMSMHCSANTGEKGDVAVFFGLSGTGKTTLSAAPNRSLIGDDEHGWDDDGVFNFEGGCYAKIINLSKESEPEIYETTRKFGTILENVAIDTISRRIDLNDDSFTENTRASYPITHIPNIVPSGMGGHPTNVIMLTCDAFGVLPPIARLTPEQAMYHFLSGYTAKVAGTEAGITEPQATFSTCFGAPFMALHPSVYAELLKAKIARHKVNCWLVNTGWSGGAYGVGSRMKIGYSRALVNAALDGTLAAGQFEKDSVFGLDIPRACPGVPGEVLNPRNVWADKAAYDATAKDLVEMFRKNFEQFKANVSQEVACVL.

Substrate-binding residues include R60, Y195, and K201. ATP is bound by residues K201, H221, and 237–245 (GLSGTGKTT). K201 and H221 together coordinate Mn(2+). D258 contacts Mn(2+). 3 residues coordinate ATP: E286, R324, and S449. R324 serves as a coordination point for substrate.

Belongs to the phosphoenolpyruvate carboxykinase (ATP) family. It depends on Mn(2+) as a cofactor.

It localises to the cytoplasm. It carries out the reaction oxaloacetate + ATP = phosphoenolpyruvate + ADP + CO2. The protein operates within carbohydrate biosynthesis; gluconeogenesis. Functionally, involved in the gluconeogenesis. Catalyzes the conversion of oxaloacetate (OAA) to phosphoenolpyruvate (PEP) through direct phosphoryl transfer between the nucleoside triphosphate and OAA. This chain is Phosphoenolpyruvate carboxykinase (ATP), found in Geotalea uraniireducens (strain Rf4) (Geobacter uraniireducens).